A 447-amino-acid chain; its full sequence is UDP-glycosyltransferase 76B1 (447 aa).

Residues serine 269, 327–328 (WA), 345–353 (HCGWNSTLE), and 367–370 (FGDQ) contribute to the UDP-alpha-D-glucose site.

Belongs to the UDP-glycosyltransferase family. Expressed in roots, leaves, hydathodes, sepals and style.

Functionally, glycosylates the amino acid-related molecules isoleucic acid (2-hydroxy-3-methylpentanoic acid) and valic acid (2-hydroxy-3-methylbutyric acid). Acts as a negative regulator of salicylic acid (SA)-dependent plant defense in the absence of pathogens and promotes the jasmonate (JA) response. Negatively influences the onset of senescence. The sequence is that of UDP-glycosyltransferase 76B1 from Arabidopsis thaliana (Mouse-ear cress).